Here is a 325-residue protein sequence, read N- to C-terminus: Holliday junction branch migration complex subunit RuvB (325 aa).

The interval 1–172 (MENNELLDIT…FGVVFRLEFY (172 aa)) is large ATPase domain (RuvB-L). Residues Leu11, Arg12, Gly53, Lys56, Thr57, Thr58, 119-121 (EDF), Arg162, Tyr172, and Arg209 each bind ATP. Thr57 is a binding site for Mg(2+). Residues 173–243 (NSEELKEIVK…IAQEALIAMD (71 aa)) are small ATPAse domain (RuvB-S). A head domain (RuvB-H) region spans residues 246 to 325 (DYGLDDMDRK…LKRKIPERLF (80 aa)). Positions 301 and 306 each coordinate DNA.

The protein belongs to the RuvB family. In terms of assembly, homohexamer. Forms an RuvA(8)-RuvB(12)-Holliday junction (HJ) complex. HJ DNA is sandwiched between 2 RuvA tetramers; dsDNA enters through RuvA and exits via RuvB. An RuvB hexamer assembles on each DNA strand where it exits the tetramer. Each RuvB hexamer is contacted by two RuvA subunits (via domain III) on 2 adjacent RuvB subunits; this complex drives branch migration. In the full resolvosome a probable DNA-RuvA(4)-RuvB(12)-RuvC(2) complex forms which resolves the HJ.

It is found in the cytoplasm. The enzyme catalyses ATP + H2O = ADP + phosphate + H(+). The RuvA-RuvB-RuvC complex processes Holliday junction (HJ) DNA during genetic recombination and DNA repair, while the RuvA-RuvB complex plays an important role in the rescue of blocked DNA replication forks via replication fork reversal (RFR). RuvA specifically binds to HJ cruciform DNA, conferring on it an open structure. The RuvB hexamer acts as an ATP-dependent pump, pulling dsDNA into and through the RuvAB complex. RuvB forms 2 homohexamers on either side of HJ DNA bound by 1 or 2 RuvA tetramers; 4 subunits per hexamer contact DNA at a time. Coordinated motions by a converter formed by DNA-disengaged RuvB subunits stimulates ATP hydrolysis and nucleotide exchange. Immobilization of the converter enables RuvB to convert the ATP-contained energy into a lever motion, pulling 2 nucleotides of DNA out of the RuvA tetramer per ATP hydrolyzed, thus driving DNA branch migration. The RuvB motors rotate together with the DNA substrate, which together with the progressing nucleotide cycle form the mechanistic basis for DNA recombination by continuous HJ branch migration. Branch migration allows RuvC to scan DNA until it finds its consensus sequence, where it cleaves and resolves cruciform DNA. The polypeptide is Holliday junction branch migration complex subunit RuvB (Thermodesulfovibrio yellowstonii (strain ATCC 51303 / DSM 11347 / YP87)).